A 253-amino-acid chain; its full sequence is tRNA pseudouridine synthase A (253 aa).

Asp-52 acts as the Nucleophile in catalysis. Position 111 (Tyr-111) interacts with substrate.

The protein belongs to the tRNA pseudouridine synthase TruA family. In terms of assembly, homodimer.

It carries out the reaction uridine(38/39/40) in tRNA = pseudouridine(38/39/40) in tRNA. Formation of pseudouridine at positions 38, 39 and 40 in the anticodon stem and loop of transfer RNAs. The protein is tRNA pseudouridine synthase A of Methylobacterium radiotolerans (strain ATCC 27329 / DSM 1819 / JCM 2831 / NBRC 15690 / NCIMB 10815 / 0-1).